The sequence spans 141 residues: MAKKIIGFIKLQIPAGAANPAPPVGPALGQKGVNIMEFCKQFNAKTQAEAGMITPVVITVYSDKSFTFITKTPPAAVLLLKEAQLKKGSGEPNRNKVGTVSREQVRRIAELKMPDLNAVDVAGAEQMVMGTARSMGIVVEN.

The protein belongs to the universal ribosomal protein uL11 family. In terms of assembly, part of the ribosomal stalk of the 50S ribosomal subunit. Interacts with L10 and the large rRNA to form the base of the stalk. L10 forms an elongated spine to which L12 dimers bind in a sequential fashion forming a multimeric L10(L12)X complex. In terms of processing, one or more lysine residues are methylated.

In terms of biological role, forms part of the ribosomal stalk which helps the ribosome interact with GTP-bound translation factors. The protein is Large ribosomal subunit protein uL11 of Chlorobium phaeobacteroides (strain DSM 266 / SMG 266 / 2430).